We begin with the raw amino-acid sequence, 396 residues long: Obg-like ATPase 1 (396 aa).

The OBG-type G domain occupies 23 to 283 (LKIGIVGLPN…MSAEEKQKYL (261 aa)). 32-37 (NVGKST) contacts ATP. Residues S36 and T56 each coordinate Mg(2+). L231 serves as a coordination point for ATP. The Nuclear export signal motif lies at 267–274 (LELKLQDM). In terms of domain architecture, TGS spans 304-387 (QLEYFFTAGP…EDGDIIFFKF (84 aa)).

The protein belongs to the TRAFAC class OBG-HflX-like GTPase superfamily. OBG GTPase family. YchF/OLA1 subfamily. Monomer. The cofactor is Mg(2+).

The protein resides in the cytoplasm. The protein localises to the nucleus. Its subcellular location is the nucleolus. Hydrolyzes ATP, and can also hydrolyze GTP with lower efficiency. Has lower affinity for GTP. The protein is Obg-like ATPase 1 of Gallus gallus (Chicken).